A 582-amino-acid polypeptide reads, in one-letter code: Tetratricopeptide repeat protein 24 (582 aa).

The disordered stretch occupies residues 1–31 (MSSPNPEDVPRRPEPEPSSSNKKKKKRKWLR). 8 TPR repeats span residues 36–69 (IQAL…ASKA), 79–112 (QACA…EKAQ), 117–150 (GDQC…YQPQ), 154–187 (GEAW…YAQE), 236–271 (GHLY…VPGE), 273–306 (ATVL…HGSV), 313–346 (GRSF…ARDS), and 353–386 (WQAC…CQKE). 2 disordered regions span residues 418-481 (TSAP…RAGP) and 548-582 (VPNG…CTIV). Residues 441–454 (GSSTAGVQHRSSSG) are compositionally biased toward polar residues. Positions 462-472 (EGHQKKKEERS) are enriched in basic and acidic residues.

The sequence is that of Tetratricopeptide repeat protein 24 (TTC24) from Homo sapiens (Human).